A 246-amino-acid chain; its full sequence is Ribonuclease 3 (246 aa).

Residues Leu10–Gly135 form the RNase III domain. Glu50 contacts Mg(2+). Asp54 is an active-site residue. Mg(2+) is bound by residues Asp121 and Glu124. Glu124 is an active-site residue. Positions Asp161–Ala230 constitute a DRBM domain.

The protein belongs to the ribonuclease III family. Homodimer. Mg(2+) is required as a cofactor.

It is found in the cytoplasm. The enzyme catalyses Endonucleolytic cleavage to 5'-phosphomonoester.. In terms of biological role, digests double-stranded RNA. Involved in the processing of primary rRNA transcript to yield the immediate precursors to the large and small rRNAs (23S and 16S). Processes some mRNAs, and tRNAs when they are encoded in the rRNA operon. Processes pre-crRNA and tracrRNA of type II CRISPR loci if present in the organism. The polypeptide is Ribonuclease 3 (Mycoplasma mobile (strain ATCC 43663 / 163K / NCTC 11711) (Mesomycoplasma mobile)).